The chain runs to 186 residues: Transcription factor FapR (186 aa).

The MaoC-like domain maps to 98–168; that stretch reads FTKTQIARGH…YVIEVNSYVR (71 aa).

Belongs to the FapR family.

Transcriptional factor involved in regulation of membrane lipid biosynthesis by repressing genes involved in fatty acid and phospholipid metabolism. The sequence is that of Transcription factor FapR from Staphylococcus haemolyticus (strain JCSC1435).